Consider the following 634-residue polypeptide: Chaperone protein dnaK2 (634 aa).

Thr-197 is modified (phosphothreonine; by autocatalysis). Positions 601–623 are enriched in low complexity; sequence GAAAAESGADAGAAGAGDSSSGD. The disordered stretch occupies residues 601–634; the sequence is GAAAAESGADAGAAGAGDSSSGDDVIDAEFTESK. The span at 624 to 634 shows a compositional bias: acidic residues; it reads DVIDAEFTESK.

The protein belongs to the heat shock protein 70 family.

Functionally, acts as a chaperone. In Prochlorococcus marinus (strain MIT 9313), this protein is Chaperone protein dnaK2 (dnaK2).